The chain runs to 616 residues: Dihydroxy-acid dehydratase (616 aa).

Residue Asp81 participates in Mg(2+) binding. Cys122 contributes to the [2Fe-2S] cluster binding site. Mg(2+) is bound by residues Asp123 and Lys124. Lys124 is subject to N6-carboxylysine. Cys195 is a [2Fe-2S] cluster binding site. Residue Glu491 coordinates Mg(2+). Ser517 (proton acceptor) is an active-site residue.

Belongs to the IlvD/Edd family. As to quaternary structure, homodimer. It depends on [2Fe-2S] cluster as a cofactor. The cofactor is Mg(2+).

The catalysed reaction is (2R)-2,3-dihydroxy-3-methylbutanoate = 3-methyl-2-oxobutanoate + H2O. The enzyme catalyses (2R,3R)-2,3-dihydroxy-3-methylpentanoate = (S)-3-methyl-2-oxopentanoate + H2O. It functions in the pathway amino-acid biosynthesis; L-isoleucine biosynthesis; L-isoleucine from 2-oxobutanoate: step 3/4. Its pathway is amino-acid biosynthesis; L-valine biosynthesis; L-valine from pyruvate: step 3/4. Functionally, functions in the biosynthesis of branched-chain amino acids. Catalyzes the dehydration of (2R,3R)-2,3-dihydroxy-3-methylpentanoate (2,3-dihydroxy-3-methylvalerate) into 2-oxo-3-methylpentanoate (2-oxo-3-methylvalerate) and of (2R)-2,3-dihydroxy-3-methylbutanoate (2,3-dihydroxyisovalerate) into 2-oxo-3-methylbutanoate (2-oxoisovalerate), the penultimate precursor to L-isoleucine and L-valine, respectively. The sequence is that of Dihydroxy-acid dehydratase from Shewanella loihica (strain ATCC BAA-1088 / PV-4).